The sequence spans 227 residues: uncharacterized protein (227 aa).

The protein localises to the virion. This is an uncharacterized protein from Acanthamoeba polyphaga (Amoeba).